The following is a 93-amino-acid chain: Acylphosphatase (93 aa).

The region spanning 4–91 (TLHLVIHGRV…PAGTGFRVAA (88 aa)) is the Acylphosphatase-like domain. Catalysis depends on residues R19 and N37.

The protein belongs to the acylphosphatase family.

The catalysed reaction is an acyl phosphate + H2O = a carboxylate + phosphate + H(+). The protein is Acylphosphatase (acyP) of Azorhizobium caulinodans (strain ATCC 43989 / DSM 5975 / JCM 20966 / LMG 6465 / NBRC 14845 / NCIMB 13405 / ORS 571).